A 421-amino-acid chain; its full sequence is Stemmadenine O-acetyltransferase (421 aa).

A disordered region spans residues 1–21 (MAPQMQILSEELIQPSSPTPQ). Active-site proton acceptor residues include H160 and D362.

This sequence belongs to the plant acyltransferase family. Monomer. As to expression, expressed in leaf epidermis.

It carries out the reaction 15alpha-stemmadenine + acetyl-CoA = O-acetyl-15alpha-stemmadenine + CoA. It functions in the pathway alkaloid biosynthesis. Its function is as follows. Component of iboga and aspidosperma monoterpenoid indole alkaloids (MIAs, e.g. tabersonine and catharanthine) biosynthesis pathway from 19E-geissoschizine. Acetyltransferase that catalyzes the formation of O-acetylstemmadenine from stemmadenine. The polypeptide is Stemmadenine O-acetyltransferase (Catharanthus roseus (Madagascar periwinkle)).